A 137-amino-acid chain; its full sequence is Immunoglobulin domain-containing protein oig-1 (137 aa).

An N-terminal signal peptide occupies residues 1–23; the sequence is MFSELRILRDILLLCFLSVGINA. The region spanning 41-133 is the Ig-like C2-type domain; the sequence is PKISRSSYFK…KGSRVKKFLT (93 aa). Cys63 and Cys118 are disulfide-bonded.

In terms of tissue distribution, expressed in DD and VD GABAergic motor neurons. Expressed in a subset of head neurons including M2 motor neurons in the pharynx. Expressed in coelomocytes.

It localises to the membrane. Its subcellular location is the secreted. It is found in the extracellular space. The protein resides in the cell projection. The protein localises to the dendrite. It localises to the axon. Plays a role in neural development, where it temporally regulates synapse formation in the D-type inhibitory GABAergic motor neurons, dorsal D (DD) and ventral D (VD) motor neurons. Controls the translocation of postsynaptic proteins, such as the acetylcholine receptor subunit acr-12, and presynaptic proteins, such as snb-1, along nerve cords to prevent premature synapse remodeling/formation. The protein is Immunoglobulin domain-containing protein oig-1 of Caenorhabditis elegans.